A 233-amino-acid polypeptide reads, in one-letter code: Small ribosomal subunit protein uS3 (233 aa).

Positions 39–107 constitute a KH type-2 domain; it reads VRKYLTKELE…PAQINIAEVR (69 aa).

The protein belongs to the universal ribosomal protein uS3 family. In terms of assembly, part of the 30S ribosomal subunit. Forms a tight complex with proteins S10 and S14.

Binds the lower part of the 30S subunit head. Binds mRNA in the 70S ribosome, positioning it for translation. In Pectobacterium carotovorum subsp. carotovorum (strain PC1), this protein is Small ribosomal subunit protein uS3.